The primary structure comprises 125 residues: DNA-directed RNA polymerase subunit omega (125 aa).

The protein belongs to the RNA polymerase subunit omega family. The RNAP catalytic core consists of 2 alpha, 1 beta, 1 beta' and 1 omega subunit. When a sigma factor is associated with the core the holoenzyme is formed, which can initiate transcription.

It carries out the reaction RNA(n) + a ribonucleoside 5'-triphosphate = RNA(n+1) + diphosphate. Promotes RNA polymerase assembly. Latches the N- and C-terminal regions of the beta' subunit thereby facilitating its interaction with the beta and alpha subunits. This Zymomonas mobilis subsp. mobilis (strain ATCC 31821 / ZM4 / CP4) protein is DNA-directed RNA polymerase subunit omega.